Here is a 524-residue protein sequence, read N- to C-terminus: uncharacterized protein (524 aa).

The first 26 residues, 1–26 (MLKIDMWFKLKSLGFSLISLQALLAS), serve as a signal peptide directing secretion. Cys27 carries N-palmitoyl cysteine lipidation. A lipid anchor (S-diacylglycerol cysteine) is attached at Cys27. The interval 37–68 (IEEKNDSTTDNNATPFKDEQSDQGTEVNQQPK) is disordered. Residues 58-68 (DQGTEVNQQPK) are compositionally biased toward polar residues.

Belongs to the MG067/MG068/MG395 family.

It localises to the cell membrane. This is an uncharacterized protein from Mycoplasma genitalium (strain ATCC 33530 / DSM 19775 / NCTC 10195 / G37) (Mycoplasmoides genitalium).